The following is a 399-amino-acid chain: Developmentally-regulated G-protein 2 (399 aa).

The OBG-type G domain maps to 63–288; the sequence is GRVALIGFPS…LLARMWDEMG (226 aa). GTP is bound by residues 69-76, 115-119, and 246-249; these read GFPSVGKS, DLPGI, and NKID. The 79-residue stretch at 288-366 folds into the TGS domain; it reads GLVRVYSKPQ…EDEDVVQIVK (79 aa). The tract at residues 372-399 is disordered; it reads EGGRGRFKSHSNAPARIADREKKAPLKQ. The segment covering 388-399 has biased composition (basic and acidic residues); the sequence is IADREKKAPLKQ.

The protein belongs to the TRAFAC class OBG-HflX-like GTPase superfamily. OBG GTPase family.

It is found in the cytoplasm. Functionally, binds GDP and GTP, and has low GTPase activity. The chain is Developmentally-regulated G-protein 2 (DRG2) from Arabidopsis thaliana (Mouse-ear cress).